Here is a 1330-residue protein sequence, read N- to C-terminus: ABC multidrug transporter mdr4 (1330 aa).

An N-linked (GlcNAc...) asparagine glycan is attached at asparagine 3. Helical transmembrane passes span 90–110 (VLLI…FPLL), 144–164 (VLYV…HSTC), 218–238 (KVGL…VAFI), 243–263 (IAGM…GGGH), 324–344 (HAAQ…LAFW), and 370–390 (IFVL…IHVF). Residues 94-392 (IGGLLFAICA…VAPFIHVFAS (299 aa)) enclose the ABC transmembrane type-1 1 domain. An ABC transporter 1 domain is found at 428 to 666 (IRFRDVHFKY…GGVYAEMVRL (239 aa)). 463–470 (GPSGGGKS) lines the ATP pocket. A glycan (N-linked (GlcNAc...) asparagine) is linked at asparagine 707. Residues 717–736 (VADTPSDSRDGSEEEARKKR) form a disordered region. Residues 722 to 733 (SDSRDGSEEEAR) show a composition bias toward basic and acidic residues. 6 helical membrane passes run 761–781 (LLGL…AIVF), 806–826 (LLFF…GCAF), 871–893 (ASAL…VNLI), 903–923 (AWKI…SGMM), 989–1009 (AWLA…YWWG), and 1023–1043 (FFIV…MFAL). Residues 761-1049 (LLGLAMSVII…MFALAPDISK (289 aa)) enclose the ABC transmembrane type-1 2 domain. The ABC transporter 2 domain maps to 1086–1325 (AQLRDVHFTY…SETYRTSVIH (240 aa)). 1121–1128 (GPSGSGKS) provides a ligand contact to ATP.

Belongs to the ABC transporter superfamily. ABCB family. Multidrug resistance exporter (TC 3.A.1.201) subfamily.

It localises to the cell membrane. The enzyme catalyses itraconazole(in) + ATP + H2O = itraconazole(out) + ADP + phosphate + H(+). It carries out the reaction voriconazole(in) + ATP + H2O = voriconazole(out) + ADP + phosphate + H(+). Its function is as follows. Pleiotropic ABC efflux transporter that confers resistance to azoles such as itraconazole and voriconazole. This chain is ABC multidrug transporter mdr4, found in Aspergillus fumigatus (strain ATCC MYA-4609 / CBS 101355 / FGSC A1100 / Af293) (Neosartorya fumigata).